We begin with the raw amino-acid sequence, 98 residues long: Integration host factor subunit alpha (98 aa).

The protein belongs to the bacterial histone-like protein family. In terms of assembly, heterodimer of an alpha and a beta chain.

Functionally, this protein is one of the two subunits of integration host factor, a specific DNA-binding protein that functions in genetic recombination as well as in transcriptional and translational control. The protein is Integration host factor subunit alpha of Idiomarina loihiensis (strain ATCC BAA-735 / DSM 15497 / L2-TR).